The chain runs to 340 residues: Ferrochelatase (340 aa).

Positions 189 and 292 each coordinate Fe cation.

The protein belongs to the ferrochelatase family.

It localises to the cytoplasm. It carries out the reaction heme b + 2 H(+) = protoporphyrin IX + Fe(2+). The protein operates within porphyrin-containing compound metabolism; protoheme biosynthesis; protoheme from protoporphyrin-IX: step 1/1. In terms of biological role, catalyzes the ferrous insertion into protoporphyrin IX. This is Ferrochelatase from Ectopseudomonas mendocina (strain ymp) (Pseudomonas mendocina).